The chain runs to 119 residues: Beta-2-microglobulin (119 aa).

A signal peptide spans 1–20 (MACFVVVALLVLLSLSGLEA). Residues 25-114 (PKIQVYSRHP…VTFSTPKTVK (90 aa)) enclose the Ig-like C1-type domain. Cys-45 and Cys-100 are joined by a disulfide.

It belongs to the beta-2-microglobulin family. In terms of assembly, heterodimer of an alpha chain and a beta chain. Beta-2-microglobulin is the beta-chain of major histocompatibility complex class I molecules.

It is found in the secreted. Its function is as follows. Component of the class I major histocompatibility complex (MHC). Involved in the presentation of peptide antigens to the immune system. The polypeptide is Beta-2-microglobulin (B2M) (Leontopithecus chrysopygus (Golden-rumped lion tamarin)).